We begin with the raw amino-acid sequence, 432 residues long: Trigger factor (432 aa).

The region spanning 161–246 (EDRVTIDFTG…LKKVEERELP (86 aa)) is the PPIase FKBP-type domain.

Belongs to the FKBP-type PPIase family. Tig subfamily.

The protein localises to the cytoplasm. The enzyme catalyses [protein]-peptidylproline (omega=180) = [protein]-peptidylproline (omega=0). Functionally, involved in protein export. Acts as a chaperone by maintaining the newly synthesized protein in an open conformation. Functions as a peptidyl-prolyl cis-trans isomerase. This is Trigger factor from Klebsiella pneumoniae subsp. pneumoniae (strain ATCC 700721 / MGH 78578).